The sequence spans 61 residues: Conotoxin TxMRCL-04 (61 aa).

A signal peptide spans 1–22 (MRCLPVFVILLLLIASTPSVDA). A propeptide spanning residues 23–46 (QLKTKDDMSLASFHDNVKRILQIR) is cleaved from the precursor.

This sequence belongs to the conotoxin T superfamily. Post-translationally, contains 2 disulfide bonds that can be either 'C1-C3, C2-C4' or 'C1-C4, C2-C3', since these disulfide connectivities have been observed for conotoxins with cysteine framework V (for examples, see AC P0DQQ7 and AC P81755). In terms of tissue distribution, expressed by the venom duct.

The protein resides in the secreted. This chain is Conotoxin TxMRCL-04, found in Conus textile (Cloth-of-gold cone).